Consider the following 522-residue polypeptide: Pectinesterase/pectinesterase inhibitor PPE8B (522 aa).

A signal peptide spans 1–30 (MPYLLMASHNPLPAGKQLLLLVLLCAFFSS). Positions 31–174 (SFIPFASCSI…TSLVQELLTQ (144 aa)) are pectinesterase inhibitor PPE8B. 6 N-linked (GlcNAc...) asparagine glycosylation sites follow: Asn-105, Asn-118, Asn-119, Asn-218, Asn-221, and Asn-274. Residues 208–506 (DAIVAQDGTG…YTVAQFIEGN (299 aa)) are pectinesterase PPE8B. Thr-283 and Gln-313 together coordinate substrate. Residue Asp-336 is the Proton donor; for pectinesterase activity of the active site. Cys-350 and Cys-370 are oxidised to a cystine. Residue Asp-357 is the Nucleophile; for pectinesterase activity of the active site. A glycan (N-linked (GlcNAc...) asparagine) is linked at Asn-405. Positions 426 and 428 each coordinate substrate. Asn-489 and Asn-496 each carry an N-linked (GlcNAc...) asparagine glycan.

The protein in the N-terminal section; belongs to the PMEI family. This sequence in the C-terminal section; belongs to the pectinesterase family.

It is found in the secreted. Its subcellular location is the cell wall. It carries out the reaction [(1-&gt;4)-alpha-D-galacturonosyl methyl ester](n) + n H2O = [(1-&gt;4)-alpha-D-galacturonosyl](n) + n methanol + n H(+). Its pathway is glycan metabolism; pectin degradation; 2-dehydro-3-deoxy-D-gluconate from pectin: step 1/5. Functionally, may have roles in the deposition of pectin in developing tissues and in the wall loosening and cell separation that occurs in cell expansion, fruit ripening and abscission. The chain is Pectinesterase/pectinesterase inhibitor PPE8B from Prunus persica (Peach).